Here is a 154-residue protein sequence, read N- to C-terminus: Large ribosomal subunit protein eL24 (154 aa).

The segment at 92 to 154 (AKRNQKPEVR…AAAPRVGGKR (63 aa)) is disordered. Basic and acidic residues predominate over residues 96-122 (QKPEVRKAQREQAVKAAKEKKKADQVG). Over residues 129–154 (KARATAPKTKAPKTVKAAAPRVGGKR) the composition is skewed to low complexity.

This sequence belongs to the eukaryotic ribosomal protein eL24 family.

This chain is Large ribosomal subunit protein eL24 (RPL24), found in Branchiostoma belcheri (Amphioxus).